We begin with the raw amino-acid sequence, 133 residues long: MEQTLVLIKGDGVRRRLIGEIIRRLENKGLAIRDLKMMRVSRELAEEHYAEHREKPFFGELVEFITSAPVVAMRVEGEGAIGVVRNLMGATDPAKAAPGTIRGDLALSMPDNLVHGSDSPQSAARELRLFFGG.

6 residues coordinate ATP: Lys-9, Phe-57, Arg-85, Thr-91, Arg-102, and Asn-112. Catalysis depends on His-115, which acts as the Pros-phosphohistidine intermediate.

Belongs to the NDK family. In terms of assembly, homotetramer. It depends on Mg(2+) as a cofactor.

Its subcellular location is the cytoplasm. The enzyme catalyses a 2'-deoxyribonucleoside 5'-diphosphate + ATP = a 2'-deoxyribonucleoside 5'-triphosphate + ADP. The catalysed reaction is a ribonucleoside 5'-diphosphate + ATP = a ribonucleoside 5'-triphosphate + ADP. In terms of biological role, major role in the synthesis of nucleoside triphosphates other than ATP. The ATP gamma phosphate is transferred to the NDP beta phosphate via a ping-pong mechanism, using a phosphorylated active-site intermediate. This Rubrobacter xylanophilus (strain DSM 9941 / JCM 11954 / NBRC 16129 / PRD-1) protein is Nucleoside diphosphate kinase.